The following is a 181-amino-acid chain: CASP-like protein UU-1 (181 aa).

Residues 1 to 30 (MTMELESQEVVVETTTAAAAARAASAAHVR) are Cytoplasmic-facing. The helical transmembrane segment at 31–51 (TTVALRLLAFAASLAAAVVVA) threads the bilayer. Topologically, residues 52 to 65 (TNRQERWGITVTFK) are extracellular. Residues 66-86 (MFAVWEAFVAINFACAAYALL) traverse the membrane as a helical segment. Residues 87–107 (TAVFVKKLVSKHWLHHMDQFT) lie on the Cytoplasmic side of the membrane. Residues 108 to 128 (VNLQAASTAGAGAVGSVAMWG) traverse the membrane as a helical segment. Topologically, residues 129 to 147 (NEPSGWYAVCRLYRLYCDR) are extracellular. The chain crosses the membrane as a helical span at residues 148–168 (GAVSLALAFVAFVAFGVASSL). Over 169 to 181 (SRYPRAPPPPAPR) the chain is Cytoplasmic.

The protein belongs to the Casparian strip membrane proteins (CASP) family. In terms of assembly, homodimer and heterodimers.

Its subcellular location is the cell membrane. This chain is CASP-like protein UU-1, found in Sorghum bicolor (Sorghum).